The primary structure comprises 310 residues: HPr kinase/phosphorylase (310 aa).

Residues His138 and Lys159 contribute to the active site. Residue 153–160 (GKSGVGKS) coordinates ATP. Ser160 is a binding site for Mg(2+). Catalysis depends on Asp177, which acts as the Proton acceptor; for phosphorylation activity. Proton donor; for dephosphorylation activity. The interval 201–210 (LEIRGLGIIN) is important for the catalytic mechanism of both phosphorylation and dephosphorylation. Residue Glu202 participates in Mg(2+) binding. Arg243 is an active-site residue. Positions 264–269 (PVRPGR) are important for the catalytic mechanism of dephosphorylation.

The protein belongs to the HPrK/P family. As to quaternary structure, homohexamer. Requires Mg(2+) as cofactor.

It catalyses the reaction [HPr protein]-L-serine + ATP = [HPr protein]-O-phospho-L-serine + ADP + H(+). It carries out the reaction [HPr protein]-O-phospho-L-serine + phosphate + H(+) = [HPr protein]-L-serine + diphosphate. Functionally, catalyzes the ATP- as well as the pyrophosphate-dependent phosphorylation of a specific serine residue in HPr, a phosphocarrier protein of the phosphoenolpyruvate-dependent sugar phosphotransferase system (PTS). HprK/P also catalyzes the pyrophosphate-producing, inorganic phosphate-dependent dephosphorylation (phosphorolysis) of seryl-phosphorylated HPr (P-Ser-HPr). The two antagonistic activities of HprK/P are regulated by several intracellular metabolites, which change their concentration in response to the absence or presence of rapidly metabolisable carbon sources (glucose, fructose, etc.) in the growth medium. Also phosphorylates/dephosphorylates the HPr-like catabolite repression protein crh on a specific serine residue. Therefore, by controlling the phosphorylation state of HPr and crh, HPrK/P is a sensor enzyme that plays a major role in the regulation of carbon metabolism and sugar transport: it mediates carbon catabolite repression (CCR), and regulates PTS-catalyzed carbohydrate uptake and inducer exclusion. This chain is HPr kinase/phosphorylase, found in Bacillus licheniformis (strain ATCC 14580 / DSM 13 / JCM 2505 / CCUG 7422 / NBRC 12200 / NCIMB 9375 / NCTC 10341 / NRRL NRS-1264 / Gibson 46).